The chain runs to 580 residues: Proline--tRNA ligase (580 aa).

This sequence belongs to the class-II aminoacyl-tRNA synthetase family. ProS type 1 subfamily. Homodimer.

It localises to the cytoplasm. It catalyses the reaction tRNA(Pro) + L-proline + ATP = L-prolyl-tRNA(Pro) + AMP + diphosphate. Its function is as follows. Catalyzes the attachment of proline to tRNA(Pro) in a two-step reaction: proline is first activated by ATP to form Pro-AMP and then transferred to the acceptor end of tRNA(Pro). As ProRS can inadvertently accommodate and process non-cognate amino acids such as alanine and cysteine, to avoid such errors it has two additional distinct editing activities against alanine. One activity is designated as 'pretransfer' editing and involves the tRNA(Pro)-independent hydrolysis of activated Ala-AMP. The other activity is designated 'posttransfer' editing and involves deacylation of mischarged Ala-tRNA(Pro). The misacylated Cys-tRNA(Pro) is not edited by ProRS. In Mycobacteroides abscessus (strain ATCC 19977 / DSM 44196 / CCUG 20993 / CIP 104536 / JCM 13569 / NCTC 13031 / TMC 1543 / L948) (Mycobacterium abscessus), this protein is Proline--tRNA ligase.